Consider the following 113-residue polypeptide: UPF0339 protein MS1092 (113 aa).

2 consecutive repeat copies span residues 11–59 (AKDG…NFEF) and 62–110 (NKNG…IKDI).

The protein belongs to the UPF0339 family. Duplicated subfamily.

The sequence is that of UPF0339 protein MS1092 from Mannheimia succiniciproducens (strain KCTC 0769BP / MBEL55E).